Here is a 217-residue protein sequence, read N- to C-terminus: AFG2-interacting ribosome maturation factor (217 aa).

Part of the 55LCC heterohexameric ATPase complex composed at least of AIRIM, AFG2A, AFG2B and CINP. Does not associate with pre-60S ribosomal particles. Phosphorylated on serines by CK2 kinase.

Its subcellular location is the nucleus. It localises to the cytoplasm. Part of the 55LCC heterohexameric ATPase complex which is chromatin-associated and promotes replisome proteostasis to maintain replication fork progression and genome stability. Required for replication fork progression, sister chromatid cohesion, and chromosome stability. The ATPase activity is specifically enhanced by replication fork DNA and is coupled to cysteine protease-dependent cleavage of replisome substrates in response to replication fork damage. Uses ATPase activity to process replisome substrates in S-phase, facilitating their proteolytic turnover from chromatin to ensure DNA replication and mitotic fidelity. Involved in the cytoplasmic maturation steps of pre-60S ribosomal particles by promoting the release of shuttling protein RSL24D1/RLP24 from the pre-ribosomal particles. This chain is AFG2-interacting ribosome maturation factor (Airim), found in Mus musculus (Mouse).